Consider the following 448-residue polypeptide: Glutamate--tRNA ligase 1 (448 aa).

Positions 10–20 (PSPTGMLHVGN) match the 'HIGH' region motif. Residues 240-244 (KISKR) carry the 'KMSKS' region motif. Lys-243 lines the ATP pocket.

The protein belongs to the class-I aminoacyl-tRNA synthetase family. Glutamate--tRNA ligase type 1 subfamily. Monomer.

Its subcellular location is the cytoplasm. The catalysed reaction is tRNA(Glu) + L-glutamate + ATP = L-glutamyl-tRNA(Glu) + AMP + diphosphate. Functionally, catalyzes the attachment of glutamate to tRNA(Glu) in a two-step reaction: glutamate is first activated by ATP to form Glu-AMP and then transferred to the acceptor end of tRNA(Glu). The polypeptide is Glutamate--tRNA ligase 1 (Rickettsia typhi (strain ATCC VR-144 / Wilmington)).